A 386-amino-acid chain; its full sequence is MATYTCITCRVAFRDAEMQRAHYKTDWHRYNLRRKVANMAPVTAEGFQERVRAQRAVAEEESKGTATYCTVCSKKFATFNAYENHLKSRRHVELEKKAVQAVSRQVEMMNEKNLEKGLGVDSVNKDAMNAAIQQAIKAQPSTSPKKAPFMPTDESRRVAGAVRRGTPERDPTEKPPRLQWFEQQAKKLAKQQWEESEEEGEEDDEDWEDIDSDDGLECENPGVEEEDAEDAEAEESPPLGAIPITDCLFCSHHSSSLVKNVAHMTKVHSFFIPDIEYLSDLKGLIKYLGEKVGVGKICLWCNEKGKSFYSTEAVQAHMNDKSHCKLFTDGDAALEFADFYDFRSSYPDYKEGQDPAEIEDLSSEKILECDDETMELILPSDLEYFD.

An N-acetylalanine modification is found at alanine 2. U1-type zinc fingers lie at residues 4–28 and 67–91; these read YTCI…TDWH and TYCT…SRRH. Positions 135–237 are disordered; the sequence is AIKAQPSTSP…AEDAEAEESP (103 aa). Residues 165-176 are compositionally biased toward basic and acidic residues; the sequence is GTPERDPTEKPP. Acidic residues predominate over residues 194–235; it reads EESEEEGEEDDEDWEDIDSDDGLECENPGVEEEDAEDAEAEE. At serine 269 the chain carries Phosphoserine.

The protein belongs to the REI1 family. Homo- and heterodimer. Associates with pre-60S ribosomal particles. Interacts with MELK and MYBL2. Interacts with DNAJC21. Post-translationally, phosphorylated by MELK. The phosphorylation may redirect the protein to the nucleus. In terms of processing, ubiquitinated by HECTD1, leading to its degradation.

The protein resides in the cytoplasm. The protein localises to the nucleus. Its function is as follows. Pre-60S-associated cytoplasmic factor involved in the cytoplasmic maturation of the 60S subunit. The polypeptide is Cytoplasmic 60S subunit biogenesis factor ZNF622 (Znf622) (Rattus norvegicus (Rat)).